The sequence spans 356 residues: Staphylococcal superantigen-like 3 (356 aa).

The signal sequence occupies residues 1–30; sequence MKMRTIAKTSLALGLLTTGAITVTTQSVKA. Residues 61–165 are disordered; it reads ATTQAANTRQ…TIKQAQTDMT (105 aa). The span at 69–104 shows a compositional bias: basic and acidic residues; sequence RQERTPKLEKAPNTNEEKTSASKIEKISQPKQEEQK. The segment covering 114 to 141 has biased composition (low complexity); sequence PKQEQSQTTTESTTPKTKVTTPPSTNTP. Residues 142–164 show a composition bias toward polar residues; the sequence is QPMQSTKSDTPQSPTIKQAQTDM. Residues 228 to 326 are sialyl Lewis X-binding; sequence IDVFIVLEDN…VIKMKNGGKY (99 aa).

Belongs to the staphylococcal/streptococcal toxin family. In terms of assembly, interacts with host TLR2 (via its extracellular domain).

It is found in the secreted. Secreted protein that plays an essential role in immune innate response inhibition by interacting with and inhibiting host TLR2. In turn, bacteria recognition by immune cells is impaired and cytokine production is inhibited. Mechanistically, by interacting with TLR2, blocks ligand binding and thus inhibits activation. Second, by interacting with an already formed TLR2-lipopeptide complex, prevents TLR heterodimerization and downstream signaling. The interaction with host TLR2 does not involve sialyl Lewis X interactions. The protein is Staphylococcal superantigen-like 3 of Staphylococcus aureus (strain NCTC 8325 / PS 47).